Reading from the N-terminus, the 377-residue chain is uncharacterized protein (377 aa).

A run of 2 helical transmembrane segments spans residues 71-91 (IIAT…LVGS) and 140-160 (AEAA…PTLF).

The protein resides in the membrane. This is an uncharacterized protein from Coxiella burnetii (strain RSA 493 / Nine Mile phase I).